Consider the following 370-residue polypeptide: tRNA-specific 2-thiouridylase MnmA (370 aa).

ATP-binding positions include 9–16 and methionine 35; that span reads GMSGGVDS. An interaction with target base in tRNA region spans residues 95–97; sequence NPD. Residue cysteine 100 is the Nucleophile of the active site. Cysteine 100 and cysteine 196 are oxidised to a cystine. Glycine 124 is an ATP binding site. Positions 146–148 are interaction with tRNA; sequence KDQ. Residue cysteine 196 is the Cysteine persulfide intermediate of the active site. The interaction with tRNA stretch occupies residues 308–309; that stretch reads RY.

This sequence belongs to the MnmA/TRMU family.

The protein resides in the cytoplasm. It catalyses the reaction S-sulfanyl-L-cysteinyl-[protein] + uridine(34) in tRNA + AH2 + ATP = 2-thiouridine(34) in tRNA + L-cysteinyl-[protein] + A + AMP + diphosphate + H(+). Catalyzes the 2-thiolation of uridine at the wobble position (U34) of tRNA, leading to the formation of s(2)U34. The sequence is that of tRNA-specific 2-thiouridylase MnmA from Ralstonia pickettii (strain 12J).